A 730-amino-acid chain; its full sequence is Transient receptor potential cation channel subfamily V member 5 (730 aa).

Residues 1–327 (MGACPPKAKG…SFKWKKYGRP (327 aa)) lie on the Cytoplasmic side of the membrane. ANK repeat units lie at residues 44 to 74 (IRDSPLLQAAKENDLRLLKILLLNQSCDFQQ), 78 to 107 (VGETALHVAALYDNLEAATLLMEAAPELAK), 116 to 145 (VGQTALHIAVMNQNLNLVRALLARGASVSA), 162 to 191 (YGEHPLSFAACVGSEEIVRLLIEHGADIRA), 195 to 228 (LGNTVLHILILQPNKTFACQMYNLLLSYDEHSDH), and 239 to 268 (QGLTPFKLAGVEGNTVMFQHLMQKRKHVQW). Residues 328–348 (YFCVLASLYILYMICFTTCCI) form a helical membrane-spanning segment. The Extracellular portion of the chain corresponds to 349-385 (YRPLKLRDDNRTDPRDITILQQKLLQEAYVTHQDNIR). Asparagine 358 carries an N-linked (GlcNAc...) asparagine glycan. A helical membrane pass occupies residues 386 to 408 (LVGELVTVTGAVIILLLEIPDIF). At 409-419 (RVGASRYFGQT) the chain is on the cytoplasmic side. Residues 420 to 442 (ILGGPFHVIIITYASLVLLTMVM) traverse the membrane as a helical segment. Residues 443 to 448 (RLTNMN) lie on the Extracellular side of the membrane. A helical membrane pass occupies residues 449 to 469 (GEVVPLSFALVLGWCSVMYFA). At 470 to 492 (RGFQMLGPFTIMIQKMIFGDLMR) the chain is on the cytoplasmic side. A helical transmembrane segment spans residues 493–513 (FCWLMAVVILGFASAFHITFQ). Positions 524–544 (SDYPTALFSTFELFLTIIDGP) form an intramembrane region, pore-forming. Aspartate 542 provides a ligand contact to Ca(2+). The helical transmembrane segment at 557–577 (ITYAAFAIIATLLMLNLFIAM) threads the bilayer. Over 578–730 (MGDTHWRVAQ…EGDGEEVYHF (153 aa)) the chain is Cytoplasmic. The interaction with S100A10 stretch occupies residues 598–602 (VATTV). The tract at residues 650-653 (AFKC) is involved in Ca(2+)-dependent inactivation. Position 685 is a phosphothreonine (threonine 685). Position 689 is a phosphoserine (serine 689). Residues 701–730 (GWEILRRNTLGHLNLGLDLGEGDGEEVYHF) form an involved in Ca(2+)-dependent inactivation region.

Belongs to the transient receptor (TC 1.A.4) family. TrpV subfamily. TRPV5 sub-subfamily. Homotetramer. Probably forms heterotetramers with TRPV6. Interacts with TRPV6. Interacts with S100A10 and probably with the ANAX2-S100A10 heterotetramer. The interaction with S100A10 is required for the trafficking to the plasma membrane. Interacts with calmodulin. Interacts with BSPRY, which results in its inactivation. Post-translationally, glycosylated. As to expression, detected in kidney cortex, in distal convoluted tubules and cortical collecting ducts (at protein level). Detected in duodenum, jejunum, ileum, kidney and placenta.

It localises to the cell membrane. Its subcellular location is the apical cell membrane. It catalyses the reaction Ca(2+)(in) = Ca(2+)(out). With respect to regulation, activated by WNK3. Its function is as follows. Constitutively active calcium selective cation channel thought to be involved in Ca(2+) reabsorption in kidney and intestine. Required for normal Ca(2+) reabsorption in the kidney distal convoluted tubules. The channel is activated by low internal calcium level and the current exhibits an inward rectification. A Ca(2+)-dependent feedback regulation includes fast channel inactivation and slow current decay. Heteromeric assembly with TRPV6 seems to modify channel properties. TRPV5-TRPV6 heteromultimeric concatemers exhibit voltage-dependent gating. The protein is Transient receptor potential cation channel subfamily V member 5 (Trpv5) of Oryctolagus cuniculus (Rabbit).